Consider the following 325-residue polypeptide: MWLSTFLALLIFVECVIVVYIPAYIESKLSKIKKNRFFNMENFENIASGAILALAFLHMLPEVIILSNKKNMNLYYIFILVLVSVTFLNITDILYDHHFESTFDVNCTLACENSNNQIKNINDKEITTNYIDIKSNEVIDLELKAMDTNINNNNNNNNNNKTDPCKTNIFFEIFKSNSFFIVLSLFIHSFIEGLLMGSLKDKNAIIIVGLSMLAHKWAECLIVYKNVVNKIENPLLASIYAWSFILSLPLGVFIAIFSFPSNEFVEIIFSSIACGFFLYLSFNMTKEIKITKSNKHFISFSYFLGVGGMSTLMILFNSFESNNII.

A run of 3 helical transmembrane segments spans residues 5–25, 46–66, and 74–94; these read TFLA…PAYI, IASG…VIIL, and LYYI…TDIL. Residues Asn-106 and Asn-160 are each glycosylated (N-linked (GlcNAc...) asparagine). 4 consecutive transmembrane segments (helical) span residues 179 to 199, 239 to 259, 264 to 284, and 296 to 316; these read FFIV…MGSL, IYAW…IFSF, FVEI…SFNM, and HFIS…MILF.

The protein localises to the cytoplasmic vesicle membrane. Putative transporter for the divalent zinc and iron cations. This is Putative metal ion transporter ZIPCO from Plasmodium falciparum (isolate 3D7).